We begin with the raw amino-acid sequence, 447 residues long: Citrate synthase-like protein oryE (447 aa).

Residues H331 and D387 contribute to the active site.

This sequence belongs to the citrate synthase family.

The protein operates within secondary metabolite biosynthesis. In terms of biological role, citrate synthase-like protein; part of the gene cluster that mediates the biosynthesis of oryzines, natural products with an unusual maleidride backbone. The two subunits of the fungal fatty acid synthase oryfasA and oryfasB probably form octenoic acid. This fatty acid is most likely activated by the acyl-CoA ligase oryP to give octenyl-CoA before the citrate synthase-like protein oryE catalyzes condensation with oxaloacetate to form tricarboxylic acid. The next steps of the pathways are conjectural, but a favorite possible route has been proposed, beginning with decarboxylation and concomitant dehydration by the decarboxylase oryM, followed by tautomerization, which may lead to the production of a diene intermediate. Reduction of this diene intermediate could give the known metabolite piliformic acid. On the pathway to oryzine B and oryzine A, however, hydroxylation of the diene by the alpha-ketoglutarate-dependent dioxygenase oryG and lactonisation by the lactonohydrolases oryH or oryL could give oryzine B directly. Finally, enoyl reduction by the dehydrogenase oryD would then convert oryzine B into oryzine A. The sequence is that of Citrate synthase-like protein oryE from Aspergillus oryzae (strain ATCC 42149 / RIB 40) (Yellow koji mold).